Consider the following 752-residue polypeptide: Catalase-peroxidase 1 (752 aa).

The tract at residues M1 to Q45 is disordered. Positions W116–Y244 form a cross-link, tryptophyl-tyrosyl-methioninium (Trp-Tyr) (with M-270). Residue H117 is the Proton acceptor of the active site. The tryptophyl-tyrosyl-methioninium (Tyr-Met) (with W-116) cross-link spans Y244–M270. H285 contacts heme b.

It belongs to the peroxidase family. Peroxidase/catalase subfamily. As to quaternary structure, homodimer or homotetramer. Heme b serves as cofactor. Post-translationally, formation of the three residue Trp-Tyr-Met cross-link is important for the catalase, but not the peroxidase activity of the enzyme.

It catalyses the reaction H2O2 + AH2 = A + 2 H2O. The enzyme catalyses 2 H2O2 = O2 + 2 H2O. Its function is as follows. Bifunctional enzyme with both catalase and broad-spectrum peroxidase activity. May play a role in the intracellular survival of mycobacteria. The chain is Catalase-peroxidase 1 from Mycolicibacterium fortuitum (Mycobacterium fortuitum).